The chain runs to 382 residues: Alcohol dehydrogenase 4 (382 aa).

The protein belongs to the iron-containing alcohol dehydrogenase family. In terms of assembly, homodimer. Requires Zn(2+) as cofactor. The cofactor is Fe(2+).

The protein localises to the mitochondrion. It carries out the reaction a primary alcohol + NAD(+) = an aldehyde + NADH + H(+). The catalysed reaction is a secondary alcohol + NAD(+) = a ketone + NADH + H(+). Its activity is regulated as follows. Inhibited by EDTA. Functionally, reduces acetaldehyde to ethanol during glucose fermentation. Specific for ethanol. Shows drastically reduced activity towards primary alcohols from 4 carbon atoms upward. Isomers of aliphatic alcohol, as well as secondary alcohols and glycerol are not used at all. In Saccharomyces cerevisiae (strain YJM789) (Baker's yeast), this protein is Alcohol dehydrogenase 4 (ADH4).